A 309-amino-acid chain; its full sequence is Foldase protein PrsA 2 (309 aa).

The signal sequence occupies residues 1-22 (MKQMNKLITGVVTLATVVTLSA). A lipid anchor (N-palmitoyl cysteine) is attached at Cys23. Cys23 carries S-diacylglycerol cysteine lipidation. One can recognise a PpiC domain in the interval 146–241 (TPTMTAEIMQ…RTYHIIKVTK (96 aa)).

The protein belongs to the PrsA family.

The protein localises to the cell membrane. The catalysed reaction is [protein]-peptidylproline (omega=180) = [protein]-peptidylproline (omega=0). Plays a major role in protein secretion by helping the post-translocational extracellular folding of several secreted proteins. The polypeptide is Foldase protein PrsA 2 (prsA2) (Streptococcus pyogenes serotype M1).